Reading from the N-terminus, the 475-residue chain is Ataxin-10 (475 aa).

An Omega-N-methylarginine modification is found at Arg-10. At Ser-12 the chain carries Phosphoserine; by AURKB. Ser-77 carries the post-translational modification Phosphoserine; by PLK1. Position 82 is a phosphothreonine; by PLK1 (Thr-82). Ser-430 carries the phosphoserine modification.

It belongs to the ataxin-10 family. Homooligomer. Interacts with GNB2. Interacts with IQCB1. Interacts with OGT. Post-translationally, polyubiquitinated. Phosphorylation at Ser-12 by AURKB promotes the association of ATXN10 with PLK1. Phosphorylation at Ser-77 and Thr-82 by PLK1 may play a role in the regulation of cytokinesis and may stimulate the proteasome-mediated degradation of ATXN10. In terms of tissue distribution, expressed in the central nervous system.

The protein resides in the cytoplasm. It is found in the perinuclear region. The protein localises to the midbody. It localises to the cytoskeleton. Its subcellular location is the cilium basal body. The protein resides in the microtubule organizing center. It is found in the centrosome. The protein localises to the centriole. May play a role in the regulation of cytokinesis. May play a role in signaling by stimulating protein glycosylation. Induces neuritogenesis by activating the Ras-MAP kinase pathway and is necessary for the survival of cerebellar neurons. Does not appear to play a major role in ciliogenesis. This is Ataxin-10 (ATXN10) from Homo sapiens (Human).